A 775-amino-acid polypeptide reads, in one-letter code: DNA polymerase (775 aa).

The protein belongs to the DNA polymerase type-B family. Monomer.

The catalysed reaction is DNA(n) + a 2'-deoxyribonucleoside 5'-triphosphate = DNA(n+1) + diphosphate. Its function is as follows. In addition to polymerase activity, this DNA polymerase exhibits 3' to 5' exonuclease activity. The protein is DNA polymerase (pol) of Pyrococcus glycovorans.